The primary structure comprises 945 residues: Leucine--tRNA ligase (945 aa).

The 'HIGH' region signature appears at 43-53; it reads PYPNGAVHIGH. The short motif at 638 to 642 is the 'KMSKS' region element; that stretch reads KMSKS. Lys-641 contacts ATP.

This sequence belongs to the class-I aminoacyl-tRNA synthetase family.

Its subcellular location is the cytoplasm. It carries out the reaction tRNA(Leu) + L-leucine + ATP = L-leucyl-tRNA(Leu) + AMP + diphosphate. The protein is Leucine--tRNA ligase of Pyrobaculum islandicum (strain DSM 4184 / JCM 9189 / GEO3).